A 129-amino-acid chain; its full sequence is Transcription factor bHLH138 (129 aa).

Residues 1 to 18 (MERYTKKNERFKAEEGKG) show a composition bias toward basic and acidic residues. Residues 1-24 (MERYTKKNERFKAEEGKGSKKSRT) form a disordered region. A bHLH domain is found at 19–68 (SKKSRTFLTERERRALFNDRFFDLKNLIPNPTKGGEASIVQDGIVYINEL).

Belongs to the bHLH protein family.

It is found in the nucleus. The chain is Transcription factor bHLH138 from Arabidopsis thaliana (Mouse-ear cress).